The following is a 302-amino-acid chain: Recombination-associated protein RdgC (302 aa).

Belongs to the RdgC family.

It localises to the cytoplasm. It is found in the nucleoid. Functionally, may be involved in recombination. This Xylella fastidiosa (strain M12) protein is Recombination-associated protein RdgC.